The following is a 483-amino-acid chain: Regulatory protein ViaA (483 aa).

This sequence belongs to the ViaA family. As to quaternary structure, homodimer. Interacts with RavA.

Its subcellular location is the cytoplasm. Its function is as follows. Component of the RavA-ViaA chaperone complex, which may act on the membrane to optimize the function of some of the respiratory chains. ViaA stimulates the ATPase activity of RavA. This is Regulatory protein ViaA from Salmonella typhi.